A 466-amino-acid polypeptide reads, in one-letter code: Transcription factor SOX-10 (466 aa).

The tract at residues 1 to 67 is disordered; it reads MAEEQDLSEV…QQDGEADDDK (67 aa). Positions 23–32 are enriched in low complexity; the sequence is LSPGSAPSLG. A Phosphoserine modification is found at Ser24. Residues 62-102 form a dimerization (DIM) region; sequence EADDDKFPVCIREAVSQVLSGYDWTLVPMPVRVNGASKSKP. A DNA-binding region (HMG box) is located at residues 104–172; the sequence is VKRPMNAFMV…QHKKDHPDYK (69 aa). The Nuclear export signal motif lies at 134–145; sequence LSKTLGKLWRLL. Composition is skewed to basic and acidic residues over residues 160 to 173 and 254 to 271; these read LRMQ…DYKY and ADPK…KPHI. Disordered stretches follow at residues 160 to 199, 212 to 274, 354 to 375, and 433 to 466; these read LRMQ…EQGG, LDHR…IDFG, AQVK…QPST, and RPLY…LSRP. The tract at residues 228–310 is transactivation domain (TAM); that stretch reads PEHPSGQSHG…LPPNGHPGHV (83 aa). Residues 353–466 form a transactivation domain (TAC) region; sequence KAQVKTETAG…QPVYTTLSRP (114 aa). Over residues 440-466 the composition is skewed to polar residues; sequence SDPSPSGPQSHSPTHWEQPVYTTLSRP.

In terms of assembly, monomer. Interacts with ARMCX3 at the mitochondrial outer membrane surface. Interacts with PAX3. In terms of tissue distribution, expressed in fetal brain and in adult brain, heart, small intestine and colon.

The protein resides in the cytoplasm. It is found in the nucleus. The protein localises to the mitochondrion outer membrane. Transcription factor that plays a central role in developing and mature glia. Specifically activates expression of myelin genes, during oligodendrocyte (OL) maturation, such as DUSP15 and MYRF, thereby playing a central role in oligodendrocyte maturation and CNS myelination. Once induced, MYRF cooperates with SOX10 to implement the myelination program. Transcriptional activator of MITF, acting synergistically with PAX3. Transcriptional activator of MBP, via binding to the gene promoter. In Homo sapiens (Human), this protein is Transcription factor SOX-10 (SOX10).